The sequence spans 380 residues: MATQLDYYAILEVSRTATADELKKSYRKLAMKYHPDRNPGDDAAEAKFKEINQAYDILKDEQKRAAYDQYGHAAFEGGGPGPGGFDFGGGFGGGGLGDIFEQMFGDMMGGRRGGRARTGNDIQTHVEITLEEAFSGVKKDVRVITRVACEACHGTGSDDGASGVEVCPSCHGAGKVRAQQGFFVVERPCPTCHGAGKVVKNPCKVCHGEGTVEKERTVEVQIPAGVEDGTRIRLSGEGEAGGNGVPPGDLYIHVSVTEHGIFQRDGANIYCRVPLRMAQAALGTEIEVPVIDGSRTKVKIPAGTQTGAHFRLRGKGFSVLRSTARGDMYIQVTVETPQNLSKRQRELLEEFEKEAGEDVKQSPEHTGFFRRVRDFFEGKE.

Residues 6–71 (DYYAILEVSR…QKRAAYDQYG (66 aa)) form the J domain. The CR-type zinc finger occupies 136–215 (GVKKDVRVIT…CHGEGTVEKE (80 aa)). Zn(2+)-binding residues include C149, C152, C167, C170, C189, C192, C203, and C206. 4 CXXCXGXG motif repeats span residues 149–156 (CEACHGTG), 167–174 (CPSCHGAG), 189–196 (CPTCHGAG), and 203–210 (CKVCHGEG).

It belongs to the DnaJ family. In terms of assembly, homodimer. Zn(2+) is required as a cofactor.

It localises to the cytoplasm. Its function is as follows. Participates actively in the response to hyperosmotic and heat shock by preventing the aggregation of stress-denatured proteins and by disaggregating proteins, also in an autonomous, DnaK-independent fashion. Unfolded proteins bind initially to DnaJ; upon interaction with the DnaJ-bound protein, DnaK hydrolyzes its bound ATP, resulting in the formation of a stable complex. GrpE releases ADP from DnaK; ATP binding to DnaK triggers the release of the substrate protein, thus completing the reaction cycle. Several rounds of ATP-dependent interactions between DnaJ, DnaK and GrpE are required for fully efficient folding. Also involved, together with DnaK and GrpE, in the DNA replication of plasmids through activation of initiation proteins. The sequence is that of Chaperone protein DnaJ from Acetobacter pasteurianus (strain NBRC 105184 / IFO 3283-01).